Here is a 397-residue protein sequence, read N- to C-terminus: Acetate kinase (397 aa).

Asn7 provides a ligand contact to Mg(2+). Residue Lys14 participates in ATP binding. Arg91 provides a ligand contact to substrate. The Proton donor/acceptor role is filled by Asp148. ATP-binding positions include 208-212 (HLGNG), 283-285 (DFR), and 331-335 (GIGEN). Glu384 is a Mg(2+) binding site.

This sequence belongs to the acetokinase family. Homodimer. It depends on Mg(2+) as a cofactor. Mn(2+) serves as cofactor.

It localises to the cytoplasm. It catalyses the reaction acetate + ATP = acetyl phosphate + ADP. The protein operates within metabolic intermediate biosynthesis; acetyl-CoA biosynthesis; acetyl-CoA from acetate: step 1/2. Functionally, catalyzes the formation of acetyl phosphate from acetate and ATP. Can also catalyze the reverse reaction. This Treponema denticola (strain ATCC 35405 / DSM 14222 / CIP 103919 / JCM 8153 / KCTC 15104) protein is Acetate kinase.